The following is a 199-amino-acid chain: Ribonuclease HII (199 aa).

In terms of domain architecture, RNase H type-2 spans 13-199; that stretch reads GLVAGVDEVG…FAPIAKILCG (187 aa). A divalent metal cation contacts are provided by D19, E20, and D110.

The protein belongs to the RNase HII family. It depends on Mn(2+) as a cofactor. Mg(2+) is required as a cofactor.

The protein localises to the cytoplasm. It carries out the reaction Endonucleolytic cleavage to 5'-phosphomonoester.. Its function is as follows. Endonuclease that specifically degrades the RNA of RNA-DNA hybrids. In Jannaschia sp. (strain CCS1), this protein is Ribonuclease HII.